A 117-amino-acid chain; its full sequence is Large ribosomal subunit protein uL22 (117 aa).

Belongs to the universal ribosomal protein uL22 family. As to quaternary structure, part of the 50S ribosomal subunit.

This protein binds specifically to 23S rRNA; its binding is stimulated by other ribosomal proteins, e.g. L4, L17, and L20. It is important during the early stages of 50S assembly. It makes multiple contacts with different domains of the 23S rRNA in the assembled 50S subunit and ribosome. Functionally, the globular domain of the protein is located near the polypeptide exit tunnel on the outside of the subunit, while an extended beta-hairpin is found that lines the wall of the exit tunnel in the center of the 70S ribosome. The chain is Large ribosomal subunit protein uL22 from Staphylococcus aureus (strain USA300).